Consider the following 366-residue polypeptide: NAD(P)H-quinone oxidoreductase subunit 1, chloroplastic (366 aa).

Helical transmembrane passes span 28-48, 105-125, 128-148, 250-270, 271-291, 303-323, and 346-366; these read IWLL…VLVI, IAVI…HLVL, LSIG…GLLM, SGIK…VSSL, FVTV…FIFI, IFGM…FLFI, and FLLP…LLSL.

This sequence belongs to the complex I subunit 1 family. NDH is composed of at least 16 different subunits, 5 of which are encoded in the nucleus.

It localises to the plastid. The protein resides in the chloroplast thylakoid membrane. The enzyme catalyses a plastoquinone + NADH + (n+1) H(+)(in) = a plastoquinol + NAD(+) + n H(+)(out). The catalysed reaction is a plastoquinone + NADPH + (n+1) H(+)(in) = a plastoquinol + NADP(+) + n H(+)(out). Its function is as follows. NDH shuttles electrons from NAD(P)H:plastoquinone, via FMN and iron-sulfur (Fe-S) centers, to quinones in the photosynthetic chain and possibly in a chloroplast respiratory chain. The immediate electron acceptor for the enzyme in this species is believed to be plastoquinone. Couples the redox reaction to proton translocation, and thus conserves the redox energy in a proton gradient. This Nandina domestica (Heavenly bamboo) protein is NAD(P)H-quinone oxidoreductase subunit 1, chloroplastic.